We begin with the raw amino-acid sequence, 278 residues long: Large ribosomal subunit protein uL2 (278 aa).

Disordered regions lie at residues 1–58 and 225–278; these read MAIR…GGGH and VMNP…KNKR. A compositionally biased stretch (basic residues) spans 37-58; that stretch reads LHGRGGRNAHGRITTRHKGGGH. Over residues 253–267 the composition is skewed to basic and acidic residues; it reads PEGRTRKNKASDKLI. Over residues 268–278 the composition is skewed to basic residues; the sequence is VRRRRTGKNKR.

The protein belongs to the universal ribosomal protein uL2 family. Part of the 50S ribosomal subunit. Forms a bridge to the 30S subunit in the 70S ribosome.

In terms of biological role, one of the primary rRNA binding proteins. Required for association of the 30S and 50S subunits to form the 70S ribosome, for tRNA binding and peptide bond formation. It has been suggested to have peptidyltransferase activity; this is somewhat controversial. Makes several contacts with the 16S rRNA in the 70S ribosome. The polypeptide is Large ribosomal subunit protein uL2 (Rhodococcus opacus (strain B4)).